Here is a 436-residue protein sequence, read N- to C-terminus: Adenylyltransferase and sulfurtransferase UBA4 (436 aa).

ATP-binding positions include G74, D95, 102 to 106 (SNLHR), K119, and 163 to 164 (DT). Positions 205 and 208 each coordinate Zn(2+). Residue C222 is the Glycyl thioester intermediate; for adenylyltransferase activity of the active site. 2 residues coordinate Zn(2+): C283 and C286. A Rhodanese domain is found at 335-434 (NEKDHILIDV…YIDEEDHSYP (100 aa)). Residue C393 is the Cysteine persulfide intermediate; for sulfurtransferase activity of the active site.

It in the N-terminal section; belongs to the HesA/MoeB/ThiF family. UBA4 subfamily. Zn(2+) serves as cofactor.

The protein resides in the cytoplasm. It is found in the cytosol. The protein operates within tRNA modification; 5-methoxycarbonylmethyl-2-thiouridine-tRNA biosynthesis. In terms of biological role, plays a central role in 2-thiolation of mcm(5)S(2)U at tRNA wobble positions of cytosolic tRNA(Lys), tRNA(Glu) and tRNA(Gln). Acts by mediating the C-terminal thiocarboxylation of sulfur carrier URM1. Its N-terminus first activates URM1 as acyl-adenylate (-COAMP), then the persulfide sulfur on the catalytic cysteine is transferred to URM1 to form thiocarboxylation (-COSH) of its C-terminus. The reaction probably involves hydrogen sulfide that is generated from the persulfide intermediate and that acts as a nucleophile towards URM1. Subsequently, a transient disulfide bond is formed. Does not use thiosulfate as sulfur donor; NFS1 probably acting as a sulfur donor for thiocarboxylation reactions. Prior mcm(5) tRNA modification by the elongator complex is required for 2-thiolation. May also be involved in protein urmylation. The chain is Adenylyltransferase and sulfurtransferase UBA4 from Vanderwaltozyma polyspora (strain ATCC 22028 / DSM 70294 / BCRC 21397 / CBS 2163 / NBRC 10782 / NRRL Y-8283 / UCD 57-17) (Kluyveromyces polysporus).